The primary structure comprises 164 residues: Peptidyl-prolyl cis-trans isomerase A-like 4D (164 aa).

Residues 7–163 form the PPIase cyclophilin-type domain; that stretch reads FFEITRDGKP…KKITIADCGQ (157 aa).

Belongs to the cyclophilin-type PPIase family. PPIase A subfamily.

It localises to the cytoplasm. It catalyses the reaction [protein]-peptidylproline (omega=180) = [protein]-peptidylproline (omega=0). PPIases accelerate the folding of proteins. It catalyzes the cis-trans isomerization of proline imidic peptide bonds in oligopeptides. This chain is Peptidyl-prolyl cis-trans isomerase A-like 4D, found in Homo sapiens (Human).